The primary structure comprises 414 residues: Arrestin domain-containing protein 3 (414 aa).

Short sequence motifs (PPxY motif) lie at residues 346–349 and 391–394; these read PPSY and PPLY. The segment at 393 to 414 is disordered; it reads LYSEIDPNPDQSSEDRPSCPSR. The span at 405–414 shows a compositional bias: basic and acidic residues; the sequence is SEDRPSCPSR.

Belongs to the arrestin family. Interacts (via PPxY motifs) with NEDD4 (via WW domains). Interacts with ADRB2. Interacts with ADRB3. Interacts with HGS (via PPxY motifs). Does not bind TXN (thioredoxin). Interacts with ITCH.

The protein localises to the cytoplasm. It localises to the cell membrane. Its subcellular location is the lysosome. It is found in the endosome. The protein resides in the early endosome. Adapter protein that plays a role in regulating cell-surface expression of adrenergic receptors and probably also other G protein-coupled receptors. Plays a role in NEDD4-mediated ubiquitination and endocytosis af activated ADRB2 and subsequent ADRB2 degradation. May recruit NEDD4 to ADRB2. Alternatively, may function as adapter protein that does not play a major role in recruiting NEDD4 to ADRB2, but rather plays a role in a targeting ADRB2 to endosomes. This is Arrestin domain-containing protein 3 (Arrdc3) from Rattus norvegicus (Rat).